A 216-amino-acid chain; its full sequence is DNA gyrase subunit B (216 aa).

In terms of domain architecture, Toprim spans S140–V216.

Belongs to the type II topoisomerase GyrB family. Heterotetramer, composed of two GyrA and two GyrB chains. In the heterotetramer, GyrA contains the active site tyrosine that forms a transient covalent intermediate with DNA, while GyrB binds cofactors and catalyzes ATP hydrolysis.

It localises to the cytoplasm. The catalysed reaction is ATP-dependent breakage, passage and rejoining of double-stranded DNA.. Functionally, a type II topoisomerase that negatively supercoils closed circular double-stranded (ds) DNA in an ATP-dependent manner to modulate DNA topology and maintain chromosomes in an underwound state. Negative supercoiling favors strand separation, and DNA replication, transcription, recombination and repair, all of which involve strand separation. Also able to catalyze the interconversion of other topological isomers of dsDNA rings, including catenanes and knotted rings. Type II topoisomerases break and join 2 DNA strands simultaneously in an ATP-dependent manner. This Acinetobacter sp. (strain SEIP 12.81) protein is DNA gyrase subunit B (gyrB).